The sequence spans 254 residues: 3-deoxy-manno-octulosonate cytidylyltransferase (254 aa).

This sequence belongs to the KdsB family.

It localises to the cytoplasm. It catalyses the reaction 3-deoxy-alpha-D-manno-oct-2-ulosonate + CTP = CMP-3-deoxy-beta-D-manno-octulosonate + diphosphate. It functions in the pathway nucleotide-sugar biosynthesis; CMP-3-deoxy-D-manno-octulosonate biosynthesis; CMP-3-deoxy-D-manno-octulosonate from 3-deoxy-D-manno-octulosonate and CTP: step 1/1. It participates in bacterial outer membrane biogenesis; lipopolysaccharide biosynthesis. In terms of biological role, activates KDO (a required 8-carbon sugar) for incorporation into bacterial lipopolysaccharide in Gram-negative bacteria. In Chlamydia pneumoniae (Chlamydophila pneumoniae), this protein is 3-deoxy-manno-octulosonate cytidylyltransferase.